The primary structure comprises 651 residues: Cysteine-rich receptor-like protein kinase 42 (651 aa).

An N-terminal signal peptide occupies residues methionine 1 to serine 28. Over serine 29–lysine 251 the chain is Extracellular. Gnk2-homologous domains follow at residues threonine 35 to phenylalanine 135 and aspartate 137 to phenylalanine 236. Residues asparagine 79 and asparagine 151 are each glycosylated (N-linked (GlcNAc...) asparagine). The chain crosses the membrane as a helical span at residues glycine 252–threonine 272. Topologically, residues tyrosine 273–isoleucine 651 are cytoplasmic. One can recognise a Protein kinase domain in the interval phenylalanine 315–leucine 604. ATP-binding positions include leucine 321–valine 329 and lysine 343. A Phosphotyrosine modification is found at tyrosine 388. The active-site Proton acceptor is the aspartate 440. 2 positions are modified to phosphoserine: serine 444 and serine 473. Phosphothreonine occurs at positions 474 and 479. At tyrosine 487 the chain carries Phosphotyrosine.

Belongs to the protein kinase superfamily. Ser/Thr protein kinase family. CRK subfamily.

It localises to the membrane. It catalyses the reaction L-seryl-[protein] + ATP = O-phospho-L-seryl-[protein] + ADP + H(+). The catalysed reaction is L-threonyl-[protein] + ATP = O-phospho-L-threonyl-[protein] + ADP + H(+). In Arabidopsis thaliana (Mouse-ear cress), this protein is Cysteine-rich receptor-like protein kinase 42 (CRK42).